Consider the following 289-residue polypeptide: Ribosomal RNA small subunit methyltransferase A (289 aa).

S-adenosyl-L-methionine contacts are provided by H27, L29, G54, E76, D102, and N123.

Belongs to the class I-like SAM-binding methyltransferase superfamily. rRNA adenine N(6)-methyltransferase family. RsmA subfamily.

The protein localises to the cytoplasm. The catalysed reaction is adenosine(1518)/adenosine(1519) in 16S rRNA + 4 S-adenosyl-L-methionine = N(6)-dimethyladenosine(1518)/N(6)-dimethyladenosine(1519) in 16S rRNA + 4 S-adenosyl-L-homocysteine + 4 H(+). Functionally, specifically dimethylates two adjacent adenosines (A1518 and A1519) in the loop of a conserved hairpin near the 3'-end of 16S rRNA in the 30S particle. May play a critical role in biogenesis of 30S subunits. This Maricaulis maris (strain MCS10) (Caulobacter maris) protein is Ribosomal RNA small subunit methyltransferase A.